A 98-amino-acid polypeptide reads, in one-letter code: Small ribosomal subunit protein bS6 (98 aa).

It belongs to the bacterial ribosomal protein bS6 family.

Its function is as follows. Binds together with bS18 to 16S ribosomal RNA. The polypeptide is Small ribosomal subunit protein bS6 (Lactobacillus acidophilus (strain ATCC 700396 / NCK56 / N2 / NCFM)).